We begin with the raw amino-acid sequence, 149 residues long: Large ribosomal subunit protein bL9 (149 aa).

Belongs to the bacterial ribosomal protein bL9 family.

Its function is as follows. Binds to the 23S rRNA. This chain is Large ribosomal subunit protein bL9, found in Salmonella dublin (strain CT_02021853).